We begin with the raw amino-acid sequence, 266 residues long: MDYINAALLGVIEGITEFLPISSTGHLIIAEQWLGHRSDMFNIVIQAGAILAVTIIYWRRLLDLVLGWREPANRDYAAKLIVAFLITAVLGLVVKKVLHFELPETATPIAWALIIGGFWMIFAEWAAARKAPHKEITWLVAILVGIAQIVAGIFPGTSRSGATIFVAMLAGTGNRAAATEFAFLVGIPTMYAASGYELLKTFKDGGAANEDWTALGIAFVVSTIVAFIAVKWLLAYIRSNRFTLFAVYRIILGVLLLGMAATGLIG.

Transmembrane regions (helical) follow at residues 38–58 (SDMF…IIYW), 80–100 (LIVA…VLHF), 108–128 (PIAW…WAAA), 136–156 (ITWL…IFPG), 176–196 (AAAT…ASGY), 217–237 (IAFV…LAYI), and 245–265 (FAVY…TGLI).

It belongs to the UppP family.

It is found in the cell inner membrane. It catalyses the reaction di-trans,octa-cis-undecaprenyl diphosphate + H2O = di-trans,octa-cis-undecaprenyl phosphate + phosphate + H(+). Its function is as follows. Catalyzes the dephosphorylation of undecaprenyl diphosphate (UPP). Confers resistance to bacitracin. The sequence is that of Undecaprenyl-diphosphatase from Rhizobium leguminosarum bv. trifolii (strain WSM2304).